The chain runs to 264 residues: Indole-3-glycerol phosphate synthase (264 aa).

The protein belongs to the TrpC family.

It carries out the reaction 1-(2-carboxyphenylamino)-1-deoxy-D-ribulose 5-phosphate + H(+) = (1S,2R)-1-C-(indol-3-yl)glycerol 3-phosphate + CO2 + H2O. It functions in the pathway amino-acid biosynthesis; L-tryptophan biosynthesis; L-tryptophan from chorismate: step 4/5. The polypeptide is Indole-3-glycerol phosphate synthase (Xylella fastidiosa (strain 9a5c)).